The primary structure comprises 1155 residues: uncharacterized protein (1155 aa).

Positions 1-19 (MNKNIFITLLISSLLLLSG) are cleaved as a signal peptide. C20 is lipidated: N-palmitoyl cysteine. A lipid anchor (S-diacylglycerol cysteine) is attached at C20. A run of 4 helical transmembrane segments spans residues 291–311 (VSAILTLYIMFTGFSFLIGNI), 395–415 (LGFIYIILYLIALYFIFFLIF), 424–444 (ALITIGMIIIMGPIFICFMLF), and 459–479 (ISYALQPIILFAGIAFISMII).

It belongs to the TrbL/VirB6 family.

The protein localises to the cell membrane. This is an uncharacterized protein from Rickettsia felis (strain ATCC VR-1525 / URRWXCal2) (Rickettsia azadi).